A 459-amino-acid polypeptide reads, in one-letter code: ATP-dependent RNA helicase me31b (459 aa).

The interval 1–267 is recA-like domain 1; sequence MMTEKLNSGH…EINLMEELTL (267 aa). Serine 8 and serine 29 each carry phosphoserine. The Q motif signature appears at 58-86; it reads NEFEEFCLKRELLMGIFEKGWERPSPIQE. In terms of domain architecture, Helicase ATP-binding spans 89-259; it reads IPIALSGKDV…EKHLREPYEI (171 aa). 102 to 109 is a binding site for ATP; that stretch reads AKNGTGKT. The DEAD box signature appears at 207–210; that stretch reads DEAD. The tract at residues 264-431 is gyf binding; the sequence is ELTLKGVTQY…PKVIDPALYV (168 aa). The region spanning 269-429 is the Helicase C-terminal domain; the sequence is GVTQYYAFVQ…PIPKVIDPAL (161 aa). A recA-like domain 2 region spans residues 432–459; the sequence is ANVGASVGDTCNNSDLNNSANEEGNVSK. Phosphoserine is present on serine 450.

This sequence belongs to the DEAD box helicase family. DDX6/DHH1 subfamily. In terms of assembly, conserved component of different types of multiprotein ribonucleoprotein complexes (RNPs) that form distinct germ granules (P-body, nuage, sponge body or polar granules) and P-body-like neuronal RNPs. Consequently it interacts with a wide variety of proteins, some of which appear to be common interactive partners in almost all RNPs types i.e. cup and tral, whereas other interactions are specific to a germ granule/RNP. Core functional components in me31B-containing RNPs include RNA regulatory proteins (such as translational repressor, RNA-decapping and exonuclease proteins), RNA localization proteins and additional proteins depending on the biological context of the RNPs. In the P-body RNPs, interacts with at least the translation repressor proteins tral, cup and Edc3, and the mRNA localization factor yps. Interaction with tral or Edc3 is required for translation repression and possibly RNA decapping; binding to tral and Edc3 is mutually exclusive. In the nuage and germ plasm polar granule RNPs, interacts with at least tral, cup, and additional proteins required for assembly and function of the germ granules such as tud, vas and aub. Interacts (when dimethylated on Arg residues) with tud; interaction is RNA-independent. Component of the osk RNP complex, which is composed of at least me31B, exu, yps, aret/bruno, cup, and the mRNA of osk. Component of the nanos RNP complex, which is composed of at least smg, cup, tral, me31B, the CCR4-NOT complex members Rga/NOT2 and Caf1-55, and the mRNA of nanos (nos). Interacts with tral and piRNA pathway components papi and AGO3; promotes interaction between nuage RNPs and the piRNA-mediated transposon silencing. Forms a RNP containing at least me31B, eIF4E1, cup, tral and pAbp; this interaction is required for the translational silencing of maternal mRNAs during the maternal-to-zygotic transition. In the sponge body, forms a RNP containing at least me31B, exu, yps and the mRNA of osk; interactions with exu and yps are RNA dependent. Component of a neuronal RNP, at least composed of me31B, tral and Fmr1. Component of the Atx2-Not1 repressor complex, composed of at least me31B, Atx2, tyf and pAbp. Interacts (via the C-terminus) with Atx2, tyf, pAbp and Lsm12a. Interacts (via RecA-like domain 2) with 4EHP-GYF2 complex member Gyf (via the me31B binding motif). Interacts with 4E-T, Edc3 and Patr-1. Symmetrically dimethylated on arginine residues. In terms of tissue distribution, ubiquitously expressed throughout the brain (at protein level). Expressed in the olfactory system including the antennal lobes, projection neurons, local interneurons, mushroom-body Kenyon cells and glial cells (at protein level).

It localises to the cytoplasm. Its subcellular location is the cytoplasmic ribonucleoprotein granule. The protein localises to the P-body. The protein resides in the endoplasmic reticulum. It is found in the cell projection. It localises to the dendrite. It catalyses the reaction ATP + H2O = ADP + phosphate + H(+). ATP-dependent RNA helicase which is a core component of a variety of ribonucleoprotein complexes (RNPs) that play critical roles in translational repression and mRNA decapping during embryogenesis, oogenesis, neurogenesis and neurotransmission. Recruits core components and translational repressors to some RNP complexes, and mediates RNP aggregation into processing granules such as P-bodies. As part of a RNP complex containing tral, eIF4E1, cup, and pAbp, involved in RNP-mediated translational repression of maternal mRNAs during oogenesis and embryogenesis. As part of a RNP complex containing tral and the RNA localization factors exu and yps, mediates translational silencing of mRNAs such as osk/oskar and bcd/bicoid during their transport to the oocyte in order to prevent their translation until they reach their positional destinations. In neurons and possibly imaginal disks, involved in miRNA-mediated translational repression, possibly in association with components of the piRNA transposon silencing pathway. Involved in RNA localization and protein trafficking in the oocyte. As part of an ER-associated RNP containing tral, cup and yps, required for tral-dependent ER exit site formation and consequently efficient trafficking of proteins such as grk and yl through the secretory pathway. Component of neuron RNPs that mediate transport and translation of neuronal RNAs, including translation repression of synaptic transcripts in preparation for their dendritic targeting. As part of the Atx2-Not1 repressor complex promotes Not1-dependent post-transcriptional gene silencing in adult circadian pacemaker neurons in order to sustain high-amplitude circadian rhythms and Pdf cycling in a per-independent manner. Promotes the interaction between Atx2 and Not1 within the Atx2-Not1 RNP complex. Recruited to the 4EHP-GYF2 complex by Gyf, where it plays a role in 4EHP-GYF2 mediated translational repression and mRNA decay. This is ATP-dependent RNA helicase me31b (me31B) from Drosophila melanogaster (Fruit fly).